Reading from the N-terminus, the 1461-residue chain is Phospholipid-transporting ATPase VB (1461 aa).

At 1–82 the chain is on the cytoplasmic side; it reads MALSVDSSWH…TTKYTLFTFL (82 aa). A helical transmembrane segment spans residues 83–104; sequence PRNLFEQFHRWANLYFLFLVIL. The Exoplasmic loop segment spans residues 105–110; the sequence is NWMPSM. A helical membrane pass occupies residues 111–132; the sequence is EVFHREITMLPLAIVLFVIMIK. At 133–316 the chain is on the cytoplasmic side; the sequence is DGMEDFKRHR…SKIERRMNID (184 aa). The helical transmembrane segment at 317 to 338 threads the bilayer; sequence IFFCIGILILMCLIGAVGHSIW. The Exoplasmic loop segment spans residues 339-368; sequence NGTFEEHPPFDVPDANGSFLPSALGGFYMF. Residues 369 to 390 form a helical membrane-spanning segment; sequence LTMIILLQVLIPISLYVSIELV. Residues 391-1111 lie on the Cytoplasmic side of the membrane; that stretch reads KLGQVFFLSN…GHWCYSRLAR (721 aa). The 4-aspartylphosphate intermediate role is filled by D433. ATP is bound by residues D433, K434, and T435. D433 provides a ligand contact to Mg(2+). T435 is a binding site for Mg(2+). 2 stretches are compositionally biased toward polar residues: residues 496-511 and 530-539; these read MRSQ…SQSA and SQPPVAFSSS. 2 disordered regions span residues 496-541 and 640-687; these read MRSQ…SSIE and TAPS…MWDQ. ATP is bound by residues E724, F766, K790, R835, T915, G916, D917, R1029, and K1035. Residue D1055 coordinates Mg(2+). ATP is bound by residues N1058 and D1059. D1059 is a binding site for Mg(2+). Residues 1112-1132 traverse the membrane as a helical segment; sequence MVVYYLYKNVCYVNLLFWYQF. The Exoplasmic loop portion of the chain corresponds to 1133–1144; it reads FCGFSSSTMIDY. A helical membrane pass occupies residues 1145-1164; the sequence is WQMIFFNLFFTSLPPLVFGV. The Cytoplasmic portion of the chain corresponds to 1165–1194; the sequence is LDKDISAETLLALPELYKSGQNSECYNLST. Residues 1195–1216 form a helical membrane-spanning segment; that stretch reads FWISMVDAFYQSLICFFIPYLA. At 1217 to 1223 the chain is on the exoplasmic loop side; that stretch reads YKGSDID. The chain crosses the membrane as a helical span at residues 1224-1246; that stretch reads VFTFGTPINTISLTTILLHQAME. Residues 1247-1252 are Cytoplasmic-facing; it reads MKTWTI. The chain crosses the membrane as a helical span at residues 1253–1273; the sequence is FHGVVLLGSFLMYFLVSLLYN. The Exoplasmic loop segment spans residues 1274-1291; it reads ATCVICNSPTNPYWVMEG. The helical transmembrane segment at 1292 to 1316 threads the bilayer; that stretch reads QLSNPTFYLVCFLTPVVALLPRYFF. Residues 1317 to 1461 are Cytoplasmic-facing; that stretch reads LSLQGTCGKS…HRRSQSSLTI (145 aa). Residues 1346–1397 are disordered; the sequence is IQSWRSRQRPAPVPEVARPTHHPVSSITGQDFSASTPKSSNPPKRKHVEESV. Residues 1368–1387 show a composition bias toward polar residues; it reads PVSSITGQDFSASTPKSSNP.

It belongs to the cation transport ATPase (P-type) (TC 3.A.3) family. Type IV subfamily. Component of a P4-ATPase flippase complex which consists of a catalytic alpha subunit ATP10B and an accessory beta subunit TMEM30A. Mg(2+) serves as cofactor. Post-translationally, autophosphorylated at the conserved aspartate of the P-type ATPase signature sequence. As to expression, expressed in predominantly in brain structures including medulla oblongata, substantia nigra and basal ganglia. Expressed in the gastrointestinal system with highest levels in the small intestine and colon. Also expressed at low levels in testis and thymus.

It is found in the late endosome membrane. The protein localises to the lysosome membrane. It localises to the endoplasmic reticulum membrane. It carries out the reaction ATP + H2O + phospholipidSide 1 = ADP + phosphate + phospholipidSide 2.. It catalyses the reaction a beta-D-glucosyl-(1&lt;-&gt;1')-N-acylsphing-4-enine(out) + ATP + H2O = a beta-D-glucosyl-(1&lt;-&gt;1')-N-acylsphing-4-enine(in) + ADP + phosphate + H(+). Functionally, catalytic component of a P4-ATPase flippase complex, which catalyzes the hydrolysis of ATP coupled to the transport of glucosylceramide (GlcCer) from the outer to the inner leaflet of lysosome membranes. Plays an important role in the maintenance of lysosome membrane integrity and function in cortical neurons. The polypeptide is Phospholipid-transporting ATPase VB (Homo sapiens (Human)).